The primary structure comprises 286 residues: Ribosomal RNA small subunit methyltransferase I (286 aa).

The protein belongs to the methyltransferase superfamily. RsmI family.

The protein localises to the cytoplasm. The catalysed reaction is cytidine(1402) in 16S rRNA + S-adenosyl-L-methionine = 2'-O-methylcytidine(1402) in 16S rRNA + S-adenosyl-L-homocysteine + H(+). Functionally, catalyzes the 2'-O-methylation of the ribose of cytidine 1402 (C1402) in 16S rRNA. This chain is Ribosomal RNA small subunit methyltransferase I, found in Escherichia coli O157:H7.